Reading from the N-terminus, the 147-residue chain is MKALIILGLLCLSVAVQGKVFERCELARTLKELGLDGYKGVSLANWLCLTKWESSYNTKATNYNPGSESTDYGIFQINSKWWCNDGKTPNAVDGCHVSCSELMENNIAKAVACAKHIVSEQGITAWVAWKSHCRDHDVSSYVEGCSL.

The first 18 residues, 1 to 18 (MKALIILGLLCLSVAVQG), serve as a signal peptide directing secretion. Residues 19-147 (KVFERCELAR…VSSYVEGCSL (129 aa)) enclose the C-type lysozyme domain. Disulfide bonds link cysteine 24–cysteine 145, cysteine 48–cysteine 133, cysteine 83–cysteine 99, and cysteine 95–cysteine 113. Residues glutamate 53 and aspartate 71 contribute to the active site.

This sequence belongs to the glycosyl hydrolase 22 family. As to quaternary structure, monomer. As to expression, expressed in stomach.

The protein localises to the secreted. It catalyses the reaction Hydrolysis of (1-&gt;4)-beta-linkages between N-acetylmuramic acid and N-acetyl-D-glucosamine residues in a peptidoglycan and between N-acetyl-D-glucosamine residues in chitodextrins.. In terms of biological role, lysozymes have primarily a bacteriolytic function; those in tissues and body fluids are associated with the monocyte-macrophage system and enhance the activity of immunoagents. This is Lysozyme C-1 from Ovis aries (Sheep).